We begin with the raw amino-acid sequence, 499 residues long: Myocyte-specific enhancer factor 2A (499 aa).

In terms of domain architecture, MADS-box spans 3-57 (RKKIQITRIMDERNRQVTFTKRKFGLMKKAYELSVLCDCEIALIIFNSSNKLFQY). Lys-4 is subject to N6-acetyllysine. The segment at residues 58–86 (ASTDMDKVLLKYTEYNEPHESRTNSDIVE) is a DNA-binding region (mef2-type). An N6-acetyllysine modification is found at Lys-117. Low complexity predominate over residues 173 to 185 (TSTTMLSPPQTTL). The tract at residues 173-269 (TSTTMLSPPQ…GGGLGMNNRK (97 aa)) is disordered. The span at 210-233 (TDLTVPNGAGTSPVGNGVWNSRAS) shows a compositional bias: polar residues. N6-acetyllysine is present on residues Lys-248, Lys-253, Lys-269, and Lys-281. The required for interaction with MAPKs stretch occupies residues 265–282 (MNNRKPDLRVVIPPSSKG). A beta domain region spans residues 288–295 (TEEDELEL). A compositionally biased stretch (low complexity) spans 380 to 392 (VSGSQLSQGSNLS). Positions 380–499 (VSGSQLSQGS…KRMRMDTWVT (120 aa)) are disordered. An N6-acetyllysine; alternate modification is found at Lys-402. A Glycyl lysine isopeptide (Lys-Gly) (interchain with G-Cter in SUMO); alternate cross-link involves residue Lys-402. Pro residues predominate over residues 421-436 (QQPPQQPQPPQPPQQP). Residues 445 to 458 (SPVDSLSSSSSSYD) show a composition bias toward low complexity. Basic and acidic residues-rich tracts occupy residues 459–469 (GSDREDPRSDF) and 480–499 (NSED…TWVT).

As to quaternary structure, binds DNA as a homo- or heterodimer. Post-translationally, sumoylation on Lys-402 is enhanced by PIAS1 and represses transcriptional activity. Has no effect on nuclear location nor on DNA binding. Sumoylated by SUMO1 and, to a lesser extent by SUMO2 and SUMO3. Acetylation on Lys-402 activates transcriptional activity. As to expression, expressed in both embryonic and adult tissues with high expression in heart and skeletal muscle. Also expressed in gut, lung and brain of 15 dpc embryos and adults.

Its subcellular location is the nucleus. Functionally, transcriptional activator which binds specifically to the MEF2 element, 5'-YTA[AT](4)TAR-3', found in numerous muscle-specific genes. Mediates cellular functions in skeletal and cardiac muscle development,. The sequence is that of Myocyte-specific enhancer factor 2A (MEF2A) from Gallus gallus (Chicken).